The chain runs to 316 residues: Melanocyte-stimulating hormone receptor (316 aa).

The Extracellular segment spans residues 1-37 (MPMQGAQRKLLGSLNSTPTATSNLGLAANHTGAPCLE). A glycan (N-linked (GlcNAc...) asparagine) is linked at N29. The chain crosses the membrane as a helical span at residues 38-63 (VSIPDGLFLSLGLVSLVENMLVVAAI). Topologically, residues 64-72 (AKNRNLHSP) are cytoplasmic. The chain crosses the membrane as a helical span at residues 73–93 (MYCFICCLALSDLLVSGSNML). Residues 94–118 (ETAVVVLLEAGALATRASVVQQLHN) lie on the Extracellular side of the membrane. A helical transmembrane segment spans residues 119–140 (TIDVLTYSSMLCSLCFVGAIAV). The Cytoplasmic portion of the chain corresponds to 141 to 163 (DRYISIFYALRYHSIMTLPRVQR). A helical membrane pass occupies residues 164–183 (VIAAIWVASVTSSTLFITYY). Residues 184-191 (EHVVALLC) lie on the Extracellular side of the membrane. The helical transmembrane segment at 192–210 (LVVFLTMLVLMAVLYVHML) threads the bilayer. Topologically, residues 211–239 (ARACQHAQGITRLHKRQPPAHQGFGLRGA) are cytoplasmic. The chain crosses the membrane as a helical span at residues 240–265 (ATLTILLGIFFLCWGPFFLHLTLVVF). The Extracellular segment spans residues 266-278 (CPQHLTCSCIFKN). Residues 279-299 (FKVFLTLIICNTIIDPLIYAF) form a helical membrane-spanning segment. Residues 300 to 316 (RSQELCRTLKEVLLCSW) are Cytoplasmic-facing. Residue C314 is the site of S-palmitoyl cysteine attachment.

Belongs to the G-protein coupled receptor 1 family. As to quaternary structure, interacts with MGRN1, but does not undergo MGRN1-mediated ubiquitination; this interaction competes with GNAS-binding and thus inhibits agonist-induced cAMP production. Interacts with OPN3; the interaction results in a decrease in MC1R-mediated cAMP signaling and ultimately a decrease in melanin production in melanocytes.

Its subcellular location is the cell membrane. Receptor for MSH (alpha, beta and gamma) and ACTH. The activity of this receptor is mediated by G proteins which activate adenylate cyclase. Mediates melanogenesis, the production of eumelanin (black/brown) and phaeomelanin (red/yellow), via regulation of cAMP signaling in melanocytes. This chain is Melanocyte-stimulating hormone receptor (MC1R), found in Cebus albifrons (White-fronted capuchin).